A 205-amino-acid chain; its full sequence is Cbp/p300-interacting transactivator 3 (205 aa).

This sequence belongs to the CITED family.

It is found in the nucleus. Its function is as follows. Acts as a transcriptional coactivator. Enhances estrogen-dependent transactivation mediated by estrogen receptors. The protein is Cbp/p300-interacting transactivator 3 (CITED3) of Gallus gallus (Chicken).